The primary structure comprises 753 residues: Inactive protein-tyrosine phosphatase egg-4 (753 aa).

2 disordered regions span residues 26-46 (TSLQ…STDN) and 75-145 (SFRK…SGHG). Residues 35-46 (NTDDSSADSTDN) are compositionally biased toward low complexity. Composition is skewed to basic and acidic residues over residues 84-94 (AQKDRRSKERL) and 129-145 (VSEK…SGHG). Residues 408 to 661 (MERRFEILEN…IFVHRLVAFF (254 aa)) enclose the Tyrosine-protein phosphatase domain.

Belongs to the protein-tyrosine phosphatase family. In terms of assembly, part of a complex, consisting of pseudophosphatases egg-3, egg-4, egg-5 and kinase mbk-2; this complex is required for the oocyte-to-zygote transition. Interacts (via tyrosine-protein phosphatase domain) with kinase mbk-2 (via 'Tyr-619' and 'Tyr-621'); mbk-2 tyrosine phosphorylation enhances the interaction. The interaction inhibits mbk-2 kinase activity and is required for mbk-2 oocyte cortex localization. Interacts with egg-3.

It localises to the cytoplasm. It is found in the cell cortex. Inactive phosphatase which acts redundantly with egg-5 in the oocyte-to-zygote transition. Required for the polarization of cortical actin cytoskeleton rearrangement in the oocyte before and after fertilization. Together with egg-5, required for the cortical localization of kinase mbk-2 and for the inhibition of mbk-2 kinase activity in maturing oocyte until the end of meiosis I. Also required for kinase mbk-2, pseudophosphatase egg-3 and chitin synthase chs-1 localization to cytoplasmic foci after fertilization. The protein is Inactive protein-tyrosine phosphatase egg-4 of Caenorhabditis elegans.